We begin with the raw amino-acid sequence, 578 residues long: Protein O-linked-mannose beta-1,4-N-acetylglucosaminyltransferase 2 (578 aa).

At 1 to 4 (MNLP) the chain is on the cytoplasmic side. A helical; Signal-anchor for type II membrane protein membrane pass occupies residues 5-25 (AVLNGLLVSVVAALLWKYVRL). At 26–578 (VEHTSQLEEE…PFADVLICKT (553 aa)) the chain is on the lumenal side. N-linked (GlcNAc...) asparagine glycosylation is found at asparagine 98, asparagine 275, and asparagine 541. Positions 482–578 (RVREPKCQTS…PFADVLICKT (97 aa)) constitute a Fibronectin type-III domain.

It belongs to the glycosyltransferase 61 family.

The protein localises to the endoplasmic reticulum membrane. It catalyses the reaction 3-O-(alpha-D-mannosyl)-L-threonyl-[protein] + UDP-N-acetyl-alpha-D-glucosamine = 3-O-(N-acetyl-beta-D-glucosaminyl-(1-&gt;4)-alpha-D-mannosyl)-L-threonyl-[protein] + UDP + H(+). It functions in the pathway protein modification; protein glycosylation. In terms of biological role, O-linked mannose beta-1,4-N-acetylglucosaminyltransferase that transfers UDP-N-acetyl-D-glucosamine to the 4-position of the mannose to generate N-acetyl-D-glucosamine-beta-1,4-O-D-mannosylprotein. Involved in the biosynthesis of the phosphorylated O-mannosyl trisaccharide (N-acetylgalactosamine-beta-3-N-acetylglucosamine-beta-4-(phosphate-6-)mannose), a carbohydrate structure present in alpha-dystroglycan (DAG1), which is required for binding laminin G-like domain-containing extracellular proteins with high affinity. This chain is Protein O-linked-mannose beta-1,4-N-acetylglucosaminyltransferase 2 (pomgnt2), found in Danio rerio (Zebrafish).